A 54-amino-acid polypeptide reads, in one-letter code: UPF0391 membrane protein RC1_1636 (54 aa).

Helical transmembrane passes span 3 to 23 and 30 to 50; these read YWAL…FGGI and IAQI…IMGL.

The protein belongs to the UPF0391 family.

Its subcellular location is the cell membrane. The chain is UPF0391 membrane protein RC1_1636 from Rhodospirillum centenum (strain ATCC 51521 / SW).